The following is a 444-amino-acid chain: Protein CLP1 homolog (444 aa).

Residues Glu-33, Lys-72, and 140 to 145 (DSGKST) contribute to the ATP site.

The protein belongs to the Clp1 family. Clp1 subfamily. As to quaternary structure, interacts with PCFS4 and SYM5. Forms a complex with cleavage and polyadenylation specificity factor (CPSF) subunits CPSF30, CPSF100, PCFS1, PCFS4, PCFS5, CPSF160 and FY.

Its subcellular location is the nucleus. Required for endonucleolytic cleavage during polyadenylation-dependent pre-mRNA 3'-end formation. Functions in gametophyte, embryo and postembryotic development. This chain is Protein CLP1 homolog (CLPS3), found in Arabidopsis thaliana (Mouse-ear cress).